The sequence spans 150 residues: MSKLSQPATTPGVNGISVIHTQAHASGLQQVPQLVPAGPGGGGKAVPPSKQSKKSSPMDRNSDEYRQRRERNNMAVKKSRLKSKQKAQDTLQRVNQLKEENERLEAKIKLLTKELSVLKDLFLEHAHSLADNVQPISTETTATNSDNPGQ.

A Glycyl lysine isopeptide (Lys-Gly) (interchain with G-Cter in SUMO2) cross-link involves residue Lys3. The disordered stretch occupies residues 27-94 (GLQQVPQLVP…QKAQDTLQRV (68 aa)). Positions 28-37 (LQQVPQLVPA) are enriched in low complexity. The span at 56 to 72 (SPMDRNSDEYRQRRERN) shows a compositional bias: basic and acidic residues. The bZIP domain occupies 62 to 125 (SDEYRQRRER…SVLKDLFLEH (64 aa)). Residues 66–93 (RQRRERNNMAVKKSRLKSKQKAQDTLQR) are basic motif. The tract at residues 97–118 (LKEENERLEAKIKLLTKELSVL) is leucine-zipper. The interval 129 to 150 (LADNVQPISTETTATNSDNPGQ) is disordered. The span at 134–150 (QPISTETTATNSDNPGQ) shows a compositional bias: polar residues.

This sequence belongs to the bZIP family. C/EBP subfamily. In terms of assembly, binds DNA as a dimer and can form stable heterodimers with CEBPA. Can form stable heterodimers with CEBPB. Interacts with ZNF638; this interaction increases transcriptional activation. Ubiquitous.

The protein localises to the nucleus. Transcription factor that binds to the promoter and the enhancer regions of target genes. Binds to the promoter and the enhancer of the immunoglobulin heavy chain. Binds to GPE1, a cis-acting element in the G-CSF gene promoter. Binds to the enhancer element PRE-I (positive regulatory element-I) of the IL-4 gene. Binds to the promoter and the enhancer of the alpha-1-fetoprotein gene. The polypeptide is CCAAT/enhancer-binding protein gamma (Cebpg) (Mus musculus (Mouse)).